The following is a 417-amino-acid chain: FISKMGYPKQTQVQVLPESGETPLFKQFFKNWRDKEATDGMGVAYVPNHIAKIENVPFDVTVLHESPAMAAQHGMVDDGSGKKQIWRIENCEKVPVLESHYGQFYGGDSYIILYHYKSGGKQGQIIYTWQGDDSTKDEITASAILSAQLDEELGGGPVQVRVVQGKEPAHLISLFGGKPMIIYKGGTSREGGQTKDANVRLFQVRTSSSGFSRAVEVDNTASNLNSNDAFVLTTPSASYLWVGQGSTNVEKNGAKELLKILGVSASEIPEGQETDDFWGALGGKADYRTSARLKDKLNAHPPRLFACSNKTGRFIIEEVPGEISQDDLATDDVMLLDTWDQVYVWVGNEAQEDEKKEAIASAYKYIESDPANRDKRTPVAITKQGFEPPTFIGWFLGWEADYWDVDPLERAMAGLSS.

Residues 93-171 (KVPVLESHYG…VVQGKEPAHL (79 aa)) form a Gelsolin-like 4 repeat. Ca(2+) contacts are provided by Gly107, Asp108, Glu138, Asp150, Gly155, Pro157, Thr187, Asn227, Asp228, Glu250, Asp331, Asp332, and Glu354. Gelsolin-like repeat units follow at residues 213–261 (RAVE…LKIL) and 316–392 (IEEV…PTFI).

This sequence belongs to the villin/gelsolin family.

Its subcellular location is the cytoplasm. It is found in the cytoskeleton. Its function is as follows. Calcium-regulated, actin-modulating protein that binds to the plus (or barbed) ends of actin monomers or filaments, preventing monomer exchange (end-blocking or capping). It can promote the assembly of monomers into filaments (nucleation) as well as sever filaments already formed. Plays a role in ciliogenesis. This Xenopus laevis (African clawed frog) protein is Gelsolin (gsn).